The primary structure comprises 241 residues: tRNA pseudouridine synthase A (241 aa).

Aspartate 52 acts as the Nucleophile in catalysis. Tyrosine 110 is a substrate binding site.

The protein belongs to the tRNA pseudouridine synthase TruA family. Homodimer.

The enzyme catalyses uridine(38/39/40) in tRNA = pseudouridine(38/39/40) in tRNA. Functionally, formation of pseudouridine at positions 38, 39 and 40 in the anticodon stem and loop of transfer RNAs. The sequence is that of tRNA pseudouridine synthase A from Aquifex aeolicus (strain VF5).